The sequence spans 553 residues: Membrane protein insertase YidC (553 aa).

The helical transmembrane segment at 6–26 (LIALVLSLLVLVFWEMYFGLF) threads the bilayer. The segment at 34-59 (NKTEQAAPTTTQPATPQTVPPQAATP) is disordered. Residues 38 to 59 (QAAPTTTQPATPQTVPPQAATP) show a composition bias toward low complexity. The next 5 helical transmembrane spans lie at 331 to 351 (LASAVDYGWFTFIAKPLVYVL), 360 to 380 (NWGVAIILLTIVIKILFWPLT), 424 to 444 (VNPMGGCLPMLLQIPVFFALY), 477 to 497 (IPYLGGLPVLTLLMGITMFIQ), and 512 to 532 (IMMIMPVMFTVFFVNFPSGLV).

Belongs to the OXA1/ALB3/YidC family. Type 1 subfamily. In terms of assembly, interacts with the Sec translocase complex via SecD. Specifically interacts with transmembrane segments of nascent integral membrane proteins during membrane integration.

It is found in the cell inner membrane. Its function is as follows. Required for the insertion and/or proper folding and/or complex formation of integral membrane proteins into the membrane. Involved in integration of membrane proteins that insert both dependently and independently of the Sec translocase complex, as well as at least some lipoproteins. Aids folding of multispanning membrane proteins. The sequence is that of Membrane protein insertase YidC from Syntrophobacter fumaroxidans (strain DSM 10017 / MPOB).